The chain runs to 94 residues: MNIRPLGDRVVVKMVETEETTKSGIVLPGSAKEKPQVAEVVAVGPGTVVDGKEVKMEVKVGDKVIISKYAGTEVKFDGQEYTILRQNDILAVVE.

The protein belongs to the GroES chaperonin family. Heptamer of 7 subunits arranged in a ring. Interacts with the chaperonin GroEL.

It localises to the cytoplasm. Functionally, together with the chaperonin GroEL, plays an essential role in assisting protein folding. The GroEL-GroES system forms a nano-cage that allows encapsulation of the non-native substrate proteins and provides a physical environment optimized to promote and accelerate protein folding. GroES binds to the apical surface of the GroEL ring, thereby capping the opening of the GroEL channel. The chain is Co-chaperonin GroES from Acetivibrio thermocellus (strain ATCC 27405 / DSM 1237 / JCM 9322 / NBRC 103400 / NCIMB 10682 / NRRL B-4536 / VPI 7372) (Clostridium thermocellum).